The chain runs to 268 residues: Peptide transport system ATP-binding protein SapF (268 aa).

The ABC transporter domain occupies 6–251; the sequence is LEVRNLSKTF…PLHELTRRLI (246 aa). Residue 47–54 coordinates ATP; it reads GENGSGKS.

The protein belongs to the ABC transporter superfamily.

It is found in the cell inner membrane. In terms of biological role, involved in a peptide intake transport system that plays a role in the resistance to antimicrobial peptides. The chain is Peptide transport system ATP-binding protein SapF from Salmonella typhimurium (strain LT2 / SGSC1412 / ATCC 700720).